A 363-amino-acid chain; its full sequence is Pyruvate dehydrogenase E1 component subunit alpha, mitochondrial (363 aa).

The N-terminal 2 residues, 1 to 2 (RN), are a transit peptide targeting the mitochondrion. Lysine 36 is modified (N6-acetyllysine; alternate). Position 36 is an N6-succinyllysine; alternate (lysine 36). Positions 65, 91, 92, 130, 138, 140, 169, 170, 171, 198, and 200 each coordinate pyruvate. Thiamine diphosphate-binding residues include tyrosine 91 and arginine 92. Residues glycine 138, valine 140, aspartate 169, glycine 170, alanine 171, and asparagine 198 each coordinate thiamine diphosphate. Residue aspartate 169 coordinates Mg(2+). Asparagine 198 and tyrosine 200 together coordinate Mg(2+). Residue serine 205 is modified to Phosphoserine; by PDK1. At lysine 217 the chain carries N6-acetyllysine; alternate. Lysine 217 carries the post-translational modification N6-succinyllysine; alternate. Lysine 240 bears the N6-acetyllysine mark. N6-succinyllysine is present on lysine 250. Histidine 265 is a binding site for thiamine diphosphate. Serine 266 bears the Phosphoserine; by PDK1, PDK2, PDK3 and PDK4 mark. Serine 268 is subject to Phosphoserine. Serine 273 is modified (phosphoserine; by PDK1, PDK2, PDK3 and PDK4). A Phosphotyrosine modification is found at tyrosine 274. Position 286 is an N6-acetyllysine; alternate (lysine 286). Lysine 286 is subject to N6-succinyllysine; alternate. Lysine 294 and lysine 309 each carry N6-acetyllysine. Lysine 358 is subject to N6-succinyllysine.

Heterotetramer of two PDHA1 and two PDHB subunits. The heterotetramer interacts with DLAT, and is part of the multimeric pyruvate dehydrogenase complex that contains multiple copies of pyruvate dehydrogenase (E1), dihydrolipoamide acetyltransferase (DLAT, E2) and lipoamide dehydrogenase (DLD, E3). These subunits are bound to an inner core composed of about 48 DLAT and 12 PDHX molecules. Thiamine diphosphate serves as cofactor. The cofactor is Mg(2+). Post-translationally, phosphorylation at Ser-205, Ser-266 and Ser-273 by PDK family kinases inactivates the enzyme; for this phosphorylation at a single site is sufficient. Phosphorylation at Ser-266 interferes with access to active site, and thereby inactivates the enzyme. Dephosphorylation at all three sites, i.e. at Ser-205, Ser-266 and Ser-273, is required for reactivation. In terms of processing, acetylation alters the phosphorylation pattern. Deacetylated by SIRT3.

It localises to the mitochondrion matrix. The enzyme catalyses N(6)-[(R)-lipoyl]-L-lysyl-[protein] + pyruvate + H(+) = N(6)-[(R)-S(8)-acetyldihydrolipoyl]-L-lysyl-[protein] + CO2. Pyruvate dehydrogenase activity is inhibited by phosphorylation of PDHA1; it is reactivated by dephosphorylation. In terms of biological role, the pyruvate dehydrogenase complex catalyzes the overall conversion of pyruvate to acetyl-CoA and CO(2), and thereby links the glycolytic pathway to the tricarboxylic cycle. The polypeptide is Pyruvate dehydrogenase E1 component subunit alpha, mitochondrial (PDHA) (Sminthopsis macroura (Stripe-faced dunnart)).